The chain runs to 107 residues: UPF0060 membrane protein ZMO1566 (107 aa).

The next 4 membrane-spanning stretches (helical) occupy residues 4–24 (LLYI…WAWI), 29–49 (SPLW…LLTF), 55–75 (AGKA…LWSW), and 84–104 (HWDL…LWMP).

The protein belongs to the UPF0060 family.

It is found in the cell inner membrane. The sequence is that of UPF0060 membrane protein ZMO1566 from Zymomonas mobilis subsp. mobilis (strain ATCC 31821 / ZM4 / CP4).